A 236-amino-acid chain; its full sequence is MDITRPIIALDLPSAEAALDFVGRFDGENLFVKVGMELFYAAGPSVVTSLKEAGHDVFCDLKLHDIPNTVKGAASSLSRLGADLLTVHAAGGRSMMEASLEGLGDAAETTRVIAITQLTSTSPEALKTEQLVDVPLVESVRNYAKLAQAAGLAGVVCSAHEAADIASVTGPNFLRVTPGIRPAGSAVGDQSRVATPGNAASMGSSAIVVGRPITKADDPVAAYHAIRDDWNAGRKA.

Substrate contacts are provided by residues Asp11, Lys33, 60–69, Thr119, Arg181, Gln190, Gly210, and Arg211; that span reads DLKLHDIPNT. The active-site Proton donor is Lys62.

It belongs to the OMP decarboxylase family. Type 1 subfamily. As to quaternary structure, homodimer.

The catalysed reaction is orotidine 5'-phosphate + H(+) = UMP + CO2. It functions in the pathway pyrimidine metabolism; UMP biosynthesis via de novo pathway; UMP from orotate: step 2/2. Its function is as follows. Catalyzes the decarboxylation of orotidine 5'-monophosphate (OMP) to uridine 5'-monophosphate (UMP). The chain is Orotidine 5'-phosphate decarboxylase from Cutibacterium acnes (strain DSM 16379 / KPA171202) (Propionibacterium acnes).